A 196-amino-acid chain; its full sequence is ATP-dependent Clp protease proteolytic subunit (196 aa).

Residue Ser101 is the Nucleophile of the active site. Residue His126 is part of the active site.

It belongs to the peptidase S14 family. Component of the chloroplastic Clp protease core complex.

It localises to the plastid. Its subcellular location is the chloroplast stroma. It catalyses the reaction Hydrolysis of proteins to small peptides in the presence of ATP and magnesium. alpha-casein is the usual test substrate. In the absence of ATP, only oligopeptides shorter than five residues are hydrolyzed (such as succinyl-Leu-Tyr-|-NHMec, and Leu-Tyr-Leu-|-Tyr-Trp, in which cleavage of the -Tyr-|-Leu- and -Tyr-|-Trp bonds also occurs).. In terms of biological role, cleaves peptides in various proteins in a process that requires ATP hydrolysis. Has a chymotrypsin-like activity. Plays a major role in the degradation of misfolded proteins. In Nasturtium officinale (Watercress), this protein is ATP-dependent Clp protease proteolytic subunit.